We begin with the raw amino-acid sequence, 1704 residues long: MNRLRQFSLLLWKDWVLLRRNKVWTLFELIIPCLLLGPLVYLVVKNADHTSSPENIYDNFQVKGTVEDVFLESNFIKPIYKRWCLRSDVVVGYTSKDAAAKRTVDDLMKKFAERFQSAKLKLSVKNESSEEQLLTVLRNDLPMLNETFCAINSYAAGVVFDEVDVTNKKLNYRILLGKTPEETWHLTETSYNPYGPSSGRYSRIPSSPPYWTSAFLTFQHAIESSFLSSVQSGAPDLPITLRGLPEPRYKTSSVSAFIDFFPFIWAFVTFINVIHITREIAAENHAVKPYLTAMGLSTFMFYAAHVVMAFLKFFVIFLCSIIPLTFVMEFVSPAALIVTVLMYGLGAVIFGAFVASFFNNTNSAIKAILVAWGAMIGISYKLRPELDQISSCFLYGLNINGAFALAVEAISDYMRRERELNLTNMFNDSSLHFSLGWALVMMIVDILWMSIGALVVDHIRTSADFSLRTLFDFEAPEDDENQTDGVTAQNTRINEQVRNRVRRSDMEIQMNPMASTSLNPPNADSDSLLEGSTEADGARDTARADIIVRNLVKIWSTTGERAVDGLSLRAVRGQCSILLGHNGAGKSTTFSSIAGIIRPTNGRITICGYDVGNEPGETRRHIGMCPQYNPLYDQLTVSEHLKLVYGLKGAREKDFKQDMKRLLSDVKLDFKENEKAVNLSGGMKRKLCVCMALIGDSEVVLLDEPTAGMDPGARQDVQKLVEREKANRTILLTTHYMDEAERLGDWVFIMSHGKLVASGTNQYLKQKFGTGYLLTVVLDHNGDKRKMAVILTDVCTHYVKEAERGEMHGQQIEIILPEARKKEFVPLFQALEAIQDRNYRSNVFDNMPNTLKSQLATLEMRSFGLSLNTLEQVFITIGDKVDKAIASRQNSRISHNSRNASEPSLKPAGYDTQSSTKSADSYQKLMDSQARGPEKSGVAKMVAQFISIMRKKFLYSRRNWAQLFTQVLIPIILLGLVGSLTTLKSNNTDQFSVRSLTPSGIEPSKVVWRFENGTIPEEAANFEKILRKSGGFEVLNYNTKNPLPNITKSLIGEMPPATIGMTMNSDNLEALFNMRYYHVLPTLISMINRARLTGTVDAEISSGVFLYSKSTSNSNLLPSQLIDVLLAPMLILIFAMVTSTFVMFLIEERTCQFAHQQFLTGISPITFYSASLIYDGILYSLICLIFLFMFLAFHWMYDHLAIVILFWFLYFFSSVPFIYAVSFLFQSPSKANVLLIIWQVVISGAALLAVFLIFMIFNIDEWLKSILVNIFMFLLPSYAFGSAIITINTYGMILPSEELMNWDHCGKNAWLMGTFGVCSFALFVLLQFKFVRRFLSQVWTVRRSSHNNVQPMMGDLPVCESVSEERERVHRVNSQNSALVIKDLTKTFGRFTAVNELCLAVDQKECFGLLGVNGAGKTTTFNILTGQSFASSGEAMIGGRDVTELISIGYCPQFDALMLDLTGRESLEILAQMHGFENYKAKAELILECVGMIAHADKLVRFYSGGQKRKISVGVALLAPTQMIILDEPTAGIDPKARREVWELLLWCREHSNSALMLTSHSMDECEALCSRIAVLNRGSLIAIGSSQELKSLYGNNYTMTLSLYEPNQRDMVVQLVQTRLPNSVLKTTSTNKTLNLKWQIPKEKEDCWSAKFEMVQALAKDLGVKDFILAQSSLEETFLRLAGLDEDQLDTHSTVEISHSTHV.

A helical transmembrane segment spans residues 23-43 (VWTLFELIIPCLLLGPLVYLV). Asn126 and Asn145 each carry an N-linked (GlcNAc...) asparagine glycan. The next 3 helical transmembrane spans lie at 256-276 (AFID…VIHI), 306-326 (VVMA…PLTF), and 334-354 (AALI…GAFV). Residue Asn359 is glycosylated (N-linked (GlcNAc...) asparagine). 2 helical membrane-spanning segments follow: residues 362–382 (NSAI…SYKL) and 389–409 (ISSC…AVEA). N-linked (GlcNAc...) asparagine glycosylation is found at Asn421 and Asn427. A helical membrane pass occupies residues 436–456 (GWALVMMIVDILWMSIGALVV). A glycan (N-linked (GlcNAc...) asparagine) is linked at Asn481. Residues 511–536 (NPMASTSLNPPNADSDSLLEGSTEAD) are disordered. The span at 512–525 (PMASTSLNPPNADS) shows a compositional bias: polar residues. Residues 546-777 (IIVRNLVKIW…FGTGYLLTVV (232 aa)) form the ABC transporter 1 domain. 580–587 (GHNGAGKS) is an ATP binding site. Residues Asn678, Asn727, and Asn899 are each glycosylated (N-linked (GlcNAc...) asparagine). 2 stretches are compositionally biased toward polar residues: residues 888-902 (RQNS…NASE) and 911-921 (DTQSSTKSADS). The disordered stretch occupies residues 888 to 933 (RQNSRISHNSRNASEPSLKPAGYDTQSSTKSADSYQKLMDSQARGP). Residues 963-983 (LFTQVLIPIILLGLVGSLTTL) traverse the membrane as a helical segment. Asn986, Asn1012, and Asn1045 each carry an N-linked (GlcNAc...) asparagine glycan. A run of 7 helical transmembrane segments spans residues 1126–1146 (LAPM…MFLI), 1153–1173 (FAHQ…ASLI), 1176–1196 (GILY…FHWM), 1201–1221 (AIVI…IYAV), 1234–1254 (LLII…FLIF), 1266–1286 (ILVN…AIIT), and 1311–1331 (LMGT…FKFV). One can recognise an ABC transporter 2 domain in the interval 1379–1603 (LVIKDLTKTF…YGNNYTMTLS (225 aa)). Residue 1411-1418 (GVNGAGKT) participates in ATP binding. N-linked (GlcNAc...) asparagine glycans are attached at residues Asn1597 and Asn1632.

Belongs to the ABC transporter superfamily. ABCA family. As to expression, ubiquitous in embryos. Expressed in larval germline precursors. Expression in larvae and adults is seen in amphid sheath cells, pharyngeal-intestinal valve and phasmid sheath cells. Low levels of expression are also seen in gonadal sheath cells.

Its subcellular location is the membrane. Its function is as follows. Functions in the engulfment of cell corpses during embryonic programmed cell death to translocate molecules that mediate homotypic adhesion between cell surfaces of the dying and engulfing cells. The polypeptide is ABC transporter ced-7 (ced-7) (Caenorhabditis elegans).